A 210-amino-acid chain; its full sequence is Probable GTP-binding protein EngB (210 aa).

The EngB-type G domain occupies 30-204; that stretch reads QGYEVAFAGR…YRVLADWMEL (175 aa). GTP is bound by residues 38–45, 64–68, 82–85, 149–152, and 182–185; these read GRSNAGKS, GRTQL, DLPG, TKAD, and LFSA. Residues Ser45 and Thr66 each contribute to the Mg(2+) site.

The protein belongs to the TRAFAC class TrmE-Era-EngA-EngB-Septin-like GTPase superfamily. EngB GTPase family. The cofactor is Mg(2+).

Its function is as follows. Necessary for normal cell division and for the maintenance of normal septation. This Pseudomonas putida (strain ATCC 700007 / DSM 6899 / JCM 31910 / BCRC 17059 / LMG 24140 / F1) protein is Probable GTP-binding protein EngB.